A 387-amino-acid chain; its full sequence is Large ribosomal subunit protein uL3 (387 aa).

The protein belongs to the universal ribosomal protein uL3 family.

The protein resides in the cytoplasm. The protein is Large ribosomal subunit protein uL3 (RPL3) of Candida glabrata (strain ATCC 2001 / BCRC 20586 / JCM 3761 / NBRC 0622 / NRRL Y-65 / CBS 138) (Yeast).